The following is a 243-amino-acid chain: Pyridoxine 5'-phosphate synthase (243 aa).

N9 lines the 3-amino-2-oxopropyl phosphate pocket. Residue 11 to 12 coordinates 1-deoxy-D-xylulose 5-phosphate; it reads DH. R20 lines the 3-amino-2-oxopropyl phosphate pocket. The active-site Proton acceptor is the H45. 1-deoxy-D-xylulose 5-phosphate contacts are provided by R47 and H52. The Proton acceptor role is filled by E72. T102 contributes to the 1-deoxy-D-xylulose 5-phosphate binding site. The active-site Proton donor is H193. 3-amino-2-oxopropyl phosphate-binding positions include G194 and 215-216; that span reads GH.

This sequence belongs to the PNP synthase family. As to quaternary structure, homooctamer; tetramer of dimers.

It localises to the cytoplasm. The enzyme catalyses 3-amino-2-oxopropyl phosphate + 1-deoxy-D-xylulose 5-phosphate = pyridoxine 5'-phosphate + phosphate + 2 H2O + H(+). Its pathway is cofactor biosynthesis; pyridoxine 5'-phosphate biosynthesis; pyridoxine 5'-phosphate from D-erythrose 4-phosphate: step 5/5. Functionally, catalyzes the complicated ring closure reaction between the two acyclic compounds 1-deoxy-D-xylulose-5-phosphate (DXP) and 3-amino-2-oxopropyl phosphate (1-amino-acetone-3-phosphate or AAP) to form pyridoxine 5'-phosphate (PNP) and inorganic phosphate. The protein is Pyridoxine 5'-phosphate synthase of Salmonella typhi.